The following is a 391-amino-acid chain: ETS-related transcription factor Elf-3 (391 aa).

Residues 65 to 151 enclose the PNT domain; sequence DPLAVLHLAE…AQLRDLTSNS (87 aa). The interval 200–271 is disordered; the sequence is YCSTYGPGAP…HGKRKRGRPR (72 aa). Residues 211–229 show a composition bias toward polar residues; the sequence is PGSSDVSTARTATPQSSHA. Over residues 242–261 the composition is skewed to basic and acidic residues; the sequence is TESKVFPRDGFPDYKKGEPK. Over residues 262–271 the composition is skewed to basic residues; that stretch reads HGKRKRGRPR. Residues 293 to 375 constitute a DNA-binding region (ETS); that stretch reads THLWEFIRDI…DGRRLVYKFG (83 aa).

It belongs to the ETS family. Interacts with TBP. Interacts with CREBBP and EP300; these act as transcriptional coactivators of ELF3 and positively modulate its function. Interacts with XRCC5/KU86 and XRCC6/KU70; these inhibit the ability of ELF3 to bind DNA and negatively modulate its transcriptional activity. Associated with CLND7 and POU2F3. Interacts with ZNF768. In terms of tissue distribution, expressed in small intestine, colon, lung, kidney and uterus. Also expressed in the corneal epithelium and conjunctiva of the developing and adult eye. Not detected in liver, spleen, thymus, brain, heart, skeletal muscle or ovary.

Its subcellular location is the cytoplasm. It is found in the nucleus. Functionally, transcriptional activator that binds and transactivates ETS sequences containing the consensus nucleotide core sequence GGA[AT]. Acts synergistically with POU2F3 to transactivate the SPRR2A promoter and with RUNX1 to transactivate the ANGPT1 promoter. Also transactivates collagenase, CCL20, CLND7, FLG, KRT8, NOS2, PTGS2, SPRR2B, TGFBR2 and TGM3 promoters. Represses KRT4 promoter activity. Involved in mediating vascular inflammation. May play an important role in epithelial cell differentiation and tumorigenesis. May be a critical downstream effector of the ERBB2 signaling pathway. May be associated with mammary gland development and involution. Plays an important role in the regulation of transcription with TATA-less promoters in preimplantation embryos, which is essential in preimplantation development. The polypeptide is ETS-related transcription factor Elf-3 (Mus musculus (Mouse)).